Reading from the N-terminus, the 233-residue chain is Protein FAM204A (233 aa).

Disordered stretches follow at residues 1 to 57 (MWSG…PSTE) and 79 to 127 (KFQE…ETQW). The segment covering 13 to 24 (SDVELNSDDDTT) has biased composition (acidic residues). Residues 34-46 (EGKEDGTFEKTEM) are compositionally biased toward basic and acidic residues. Positions 98–109 (EKKKRKRSRKGK) are enriched in basic residues. A coiled-coil region spans residues 144–164 (VKRKKVEKSGLEKRIDQAVEE).

This Bos taurus (Bovine) protein is Protein FAM204A (FAM204A).